The primary structure comprises 658 residues: UvrABC system protein B (658 aa).

One can recognise a Helicase ATP-binding domain in the interval 25–416 (QFIHNGAQYS…QEHIAEQIIR (392 aa)). Position 38 to 45 (38 to 45 (GVTGSGKT)) interacts with ATP. The Beta-hairpin signature appears at 91–114 (HFDYYQPEAYIPRRDLFIEKDSSI). A Helicase C-terminal domain is found at 433–607 (AVLDLYDEIK…ELKIESSGLS (175 aa)). Residues 623-658 (ESIIKELNIKMHQAAKALEFEEAARLRDEIARIRTM) form the UVR domain.

The protein belongs to the UvrB family. As to quaternary structure, forms a heterotetramer with UvrA during the search for lesions. Interacts with UvrC in an incision complex.

The protein localises to the cytoplasm. Its function is as follows. The UvrABC repair system catalyzes the recognition and processing of DNA lesions. A damage recognition complex composed of 2 UvrA and 2 UvrB subunits scans DNA for abnormalities. Upon binding of the UvrA(2)B(2) complex to a putative damaged site, the DNA wraps around one UvrB monomer. DNA wrap is dependent on ATP binding by UvrB and probably causes local melting of the DNA helix, facilitating insertion of UvrB beta-hairpin between the DNA strands. Then UvrB probes one DNA strand for the presence of a lesion. If a lesion is found the UvrA subunits dissociate and the UvrB-DNA preincision complex is formed. This complex is subsequently bound by UvrC and the second UvrB is released. If no lesion is found, the DNA wraps around the other UvrB subunit that will check the other stand for damage. This chain is UvrABC system protein B, found in Helicobacter hepaticus (strain ATCC 51449 / 3B1).